Consider the following 134-residue polypeptide: Putative pre-16S rRNA nuclease (134 aa).

It belongs to the YqgF nuclease family.

The protein resides in the cytoplasm. Could be a nuclease involved in processing of the 5'-end of pre-16S rRNA. In Helicobacter pylori (strain HPAG1), this protein is Putative pre-16S rRNA nuclease.